The primary structure comprises 79 residues: Large ribosomal subunit protein uL29 (79 aa).

This sequence belongs to the universal ribosomal protein uL29 family.

This is Large ribosomal subunit protein uL29 from Gluconacetobacter diazotrophicus (strain ATCC 49037 / DSM 5601 / CCUG 37298 / CIP 103539 / LMG 7603 / PAl5).